Reading from the N-terminus, the 136-residue chain is uncharacterized protein (136 aa).

This is an uncharacterized protein from Acheta domesticus (House cricket).